The chain runs to 410 residues: Cysteine desulfurase IscS (410 aa).

Pyridoxal 5'-phosphate is bound by residues alanine 80 to threonine 81, asparagine 160, glutamine 188, and serine 208 to histidine 210. Residue lysine 211 is modified to N6-(pyridoxal phosphate)lysine. Threonine 248 is a pyridoxal 5'-phosphate binding site. Residue cysteine 334 is the Cysteine persulfide intermediate of the active site. Cysteine 334 is a binding site for [2Fe-2S] cluster.

Belongs to the class-V pyridoxal-phosphate-dependent aminotransferase family. NifS/IscS subfamily. As to quaternary structure, homodimer. Forms a heterotetramer with IscU, interacts with other sulfur acceptors. Pyridoxal 5'-phosphate is required as a cofactor.

It localises to the cytoplasm. The catalysed reaction is (sulfur carrier)-H + L-cysteine = (sulfur carrier)-SH + L-alanine. Its pathway is cofactor biosynthesis; iron-sulfur cluster biosynthesis. Its function is as follows. Master enzyme that delivers sulfur to a number of partners involved in Fe-S cluster assembly, tRNA modification or cofactor biosynthesis. Catalyzes the removal of elemental sulfur atoms from cysteine to produce alanine. Functions as a sulfur delivery protein for Fe-S cluster synthesis onto IscU, an Fe-S scaffold assembly protein, as well as other S acceptor proteins. This chain is Cysteine desulfurase IscS, found in Rickettsia peacockii (strain Rustic).